The following is a 120-amino-acid chain: NAD(P)H-quinone oxidoreductase subunit 3, chloroplastic (120 aa).

A run of 3 helical transmembrane segments spans residues 9 to 29 (IFWAFLIISSAIPVLAFLISG), 64 to 84 (MFALVFVVFDVETVFLYPWAM), and 88 to 108 (VLGVSAFIEVFIFVLILILGL).

Belongs to the complex I subunit 3 family. NDH is composed of at least 16 different subunits, 5 of which are encoded in the nucleus.

The protein resides in the plastid. It is found in the chloroplast thylakoid membrane. It carries out the reaction a plastoquinone + NADH + (n+1) H(+)(in) = a plastoquinol + NAD(+) + n H(+)(out). The catalysed reaction is a plastoquinone + NADPH + (n+1) H(+)(in) = a plastoquinol + NADP(+) + n H(+)(out). NDH shuttles electrons from NAD(P)H:plastoquinone, via FMN and iron-sulfur (Fe-S) centers, to quinones in the photosynthetic chain and possibly in a chloroplast respiratory chain. The immediate electron acceptor for the enzyme in this species is believed to be plastoquinone. Couples the redox reaction to proton translocation, and thus conserves the redox energy in a proton gradient. The sequence is that of NAD(P)H-quinone oxidoreductase subunit 3, chloroplastic from Arabis hirsuta (Hairy rock-cress).